The following is a 435-amino-acid chain: Ribosomal protein uS12 methylthiotransferase RimO (435 aa).

One can recognise an MTTase N-terminal domain in the interval 3–113 (HKVGFVSLGC…VVNAVHQYLP (111 aa)). Cys-12, Cys-48, Cys-77, Cys-144, Cys-148, and Cys-151 together coordinate [4Fe-4S] cluster. Residues 130 to 367 (LTPRHYAYLK…MQVQAEISRN (238 aa)) form the Radical SAM core domain. The region spanning 370–435 (KNKIGSTQTV…DDYDLYASLV (66 aa)) is the TRAM domain.

Belongs to the methylthiotransferase family. RimO subfamily. It depends on [4Fe-4S] cluster as a cofactor.

It is found in the cytoplasm. The catalysed reaction is L-aspartate(89)-[ribosomal protein uS12]-hydrogen + (sulfur carrier)-SH + AH2 + 2 S-adenosyl-L-methionine = 3-methylsulfanyl-L-aspartate(89)-[ribosomal protein uS12]-hydrogen + (sulfur carrier)-H + 5'-deoxyadenosine + L-methionine + A + S-adenosyl-L-homocysteine + 2 H(+). Catalyzes the methylthiolation of an aspartic acid residue of ribosomal protein uS12. This chain is Ribosomal protein uS12 methylthiotransferase RimO, found in Legionella pneumophila subsp. pneumophila (strain Philadelphia 1 / ATCC 33152 / DSM 7513).